The primary structure comprises 164 residues: Endoribonuclease YbeY (164 aa).

3 residues coordinate Zn(2+): H132, H136, and H142.

It belongs to the endoribonuclease YbeY family. It depends on Zn(2+) as a cofactor.

It is found in the cytoplasm. In terms of biological role, single strand-specific metallo-endoribonuclease involved in late-stage 70S ribosome quality control and in maturation of the 3' terminus of the 16S rRNA. In Clostridium kluyveri (strain NBRC 12016), this protein is Endoribonuclease YbeY.